The sequence spans 406 residues: Phosphopentomutase (406 aa).

Mn(2+) contacts are provided by aspartate 10, aspartate 305, histidine 310, aspartate 346, histidine 347, and histidine 358.

It belongs to the phosphopentomutase family. Mn(2+) is required as a cofactor.

The protein localises to the cytoplasm. It catalyses the reaction 2-deoxy-alpha-D-ribose 1-phosphate = 2-deoxy-D-ribose 5-phosphate. It carries out the reaction alpha-D-ribose 1-phosphate = D-ribose 5-phosphate. The protein operates within carbohydrate degradation; 2-deoxy-D-ribose 1-phosphate degradation; D-glyceraldehyde 3-phosphate and acetaldehyde from 2-deoxy-alpha-D-ribose 1-phosphate: step 1/2. Isomerase that catalyzes the conversion of deoxy-ribose 1-phosphate (dRib-1-P) and ribose 1-phosphate (Rib-1-P) to deoxy-ribose 5-phosphate (dRib-5-P) and ribose 5-phosphate (Rib-5-P), respectively. The polypeptide is Phosphopentomutase (Methylobacterium radiotolerans (strain ATCC 27329 / DSM 1819 / JCM 2831 / NBRC 15690 / NCIMB 10815 / 0-1)).